We begin with the raw amino-acid sequence, 510 residues long: 2,3-bisphosphoglycerate-independent phosphoglycerate mutase (510 aa).

Residues D12 and S62 each contribute to the Mn(2+) site. The active-site Phosphoserine intermediate is the S62. Substrate is bound by residues H123, 153–154 (RD), R185, R191, 260–263 (RPDR), and K335. Mn(2+) contacts are provided by D402, H406, D443, H444, and H461.

It belongs to the BPG-independent phosphoglycerate mutase family. In terms of assembly, monomer. It depends on Mn(2+) as a cofactor.

The enzyme catalyses (2R)-2-phosphoglycerate = (2R)-3-phosphoglycerate. Its pathway is carbohydrate degradation; glycolysis; pyruvate from D-glyceraldehyde 3-phosphate: step 3/5. In terms of biological role, catalyzes the interconversion of 2-phosphoglycerate and 3-phosphoglycerate. The sequence is that of 2,3-bisphosphoglycerate-independent phosphoglycerate mutase from Listeria monocytogenes serotype 4b (strain F2365).